The primary structure comprises 423 residues: Serine--tRNA ligase (423 aa).

231–233 (TAE) contacts L-serine. 262-264 (RSE) provides a ligand contact to ATP. Residue Glu285 coordinates L-serine. Residue 349–352 (EISS) participates in ATP binding. Ser384 contributes to the L-serine binding site.

Belongs to the class-II aminoacyl-tRNA synthetase family. Type-1 seryl-tRNA synthetase subfamily. As to quaternary structure, homodimer. The tRNA molecule binds across the dimer.

It localises to the cytoplasm. It catalyses the reaction tRNA(Ser) + L-serine + ATP = L-seryl-tRNA(Ser) + AMP + diphosphate + H(+). The catalysed reaction is tRNA(Sec) + L-serine + ATP = L-seryl-tRNA(Sec) + AMP + diphosphate + H(+). It participates in aminoacyl-tRNA biosynthesis; selenocysteinyl-tRNA(Sec) biosynthesis; L-seryl-tRNA(Sec) from L-serine and tRNA(Sec): step 1/1. Functionally, catalyzes the attachment of serine to tRNA(Ser). Is also able to aminoacylate tRNA(Sec) with serine, to form the misacylated tRNA L-seryl-tRNA(Sec), which will be further converted into selenocysteinyl-tRNA(Sec). In Lactococcus lactis subsp. lactis (strain IL1403) (Streptococcus lactis), this protein is Serine--tRNA ligase.